Reading from the N-terminus, the 294-residue chain is 4-hydroxybenzoate octaprenyltransferase (294 aa).

Helical transmembrane passes span 37–57 (LWAMWMAAGGPPGWTLFWIFF), 101–121 (LAVAAVLALIALALILPLNAL), 142–162 (FFAIPQAYLGIAFGFGIPMAF), 169–189 (VPFVAWLMLLANVFWAIAYDT), 219–239 (IMICYAVFLGLMAWAGSLLGL), 241–261 (WPYYAGLVAAAGMAGYHYTLI), and 271–293 (AAFRHNNWLGACVFAGTFVAYLL).

This sequence belongs to the UbiA prenyltransferase family. Mg(2+) is required as a cofactor.

The protein localises to the cell inner membrane. It catalyses the reaction all-trans-octaprenyl diphosphate + 4-hydroxybenzoate = 4-hydroxy-3-(all-trans-octaprenyl)benzoate + diphosphate. It participates in cofactor biosynthesis; ubiquinone biosynthesis. Catalyzes the prenylation of para-hydroxybenzoate (PHB) with an all-trans polyprenyl group. Mediates the second step in the final reaction sequence of ubiquinone-8 (UQ-8) biosynthesis, which is the condensation of the polyisoprenoid side chain with PHB, generating the first membrane-bound Q intermediate 3-octaprenyl-4-hydroxybenzoate. The chain is 4-hydroxybenzoate octaprenyltransferase from Cupriavidus metallidurans (strain ATCC 43123 / DSM 2839 / NBRC 102507 / CH34) (Ralstonia metallidurans).